The primary structure comprises 93 residues: DNA/RNA-binding protein Alba (93 aa).

N6-acetyllysine is present on Lys-11.

The protein belongs to the histone-like Alba family. In terms of processing, acetylated. Acetylation at Lys-11 decreases DNA-binding affinity.

The protein resides in the cytoplasm. It localises to the chromosome. Functionally, binds double-stranded DNA tightly but without sequence specificity. Involved in DNA compaction. This is DNA/RNA-binding protein Alba from Pyrococcus abyssi (strain GE5 / Orsay).